The chain runs to 220 residues: Octanoyltransferase (220 aa).

A BPL/LPL catalytic domain is found at 27–208 (PGTADEIWLC…QLARAHGQAV (182 aa)). Residues 66-73 (RGGQVTYH), 139-141 (ALG), and 152-154 (GLA) each bind substrate. Catalysis depends on C170, which acts as the Acyl-thioester intermediate.

Belongs to the LipB family.

The protein resides in the cytoplasm. The enzyme catalyses octanoyl-[ACP] + L-lysyl-[protein] = N(6)-octanoyl-L-lysyl-[protein] + holo-[ACP] + H(+). Its pathway is protein modification; protein lipoylation via endogenous pathway; protein N(6)-(lipoyl)lysine from octanoyl-[acyl-carrier-protein]: step 1/2. Functionally, catalyzes the transfer of endogenously produced octanoic acid from octanoyl-acyl-carrier-protein onto the lipoyl domains of lipoate-dependent enzymes. Lipoyl-ACP can also act as a substrate although octanoyl-ACP is likely to be the physiological substrate. In Bordetella bronchiseptica (strain ATCC BAA-588 / NCTC 13252 / RB50) (Alcaligenes bronchisepticus), this protein is Octanoyltransferase.